The sequence spans 328 residues: Phosphatidylglycerol--prolipoprotein diacylglyceryl transferase (328 aa).

Helical transmembrane passes span 15–35, 58–78, and 106–126; these read VIQG…ILIS, FMFS…TLVY, and GMAI…IINT. Residue R156 coordinates a 1,2-diacyl-sn-glycero-3-phospho-(1'-sn-glycerol). 2 helical membrane passes run 242 to 262 and 289 to 309; these read GFIF…IEYL and ISMG…WVVV.

This sequence belongs to the Lgt family.

The protein resides in the cell inner membrane. It catalyses the reaction L-cysteinyl-[prolipoprotein] + a 1,2-diacyl-sn-glycero-3-phospho-(1'-sn-glycerol) = an S-1,2-diacyl-sn-glyceryl-L-cysteinyl-[prolipoprotein] + sn-glycerol 1-phosphate + H(+). Its pathway is protein modification; lipoprotein biosynthesis (diacylglyceryl transfer). Its function is as follows. Catalyzes the transfer of the diacylglyceryl group from phosphatidylglycerol to the sulfhydryl group of the N-terminal cysteine of a prolipoprotein, the first step in the formation of mature lipoproteins. The protein is Phosphatidylglycerol--prolipoprotein diacylglyceryl transferase of Borrelia garinii subsp. bavariensis (strain ATCC BAA-2496 / DSM 23469 / PBi) (Borreliella bavariensis).